The chain runs to 476 residues: Aspartyl/glutamyl-tRNA(Asn/Gln) amidotransferase subunit B (476 aa).

It belongs to the GatB/GatE family. GatB subfamily. Heterotrimer of A, B and C subunits.

The catalysed reaction is L-glutamyl-tRNA(Gln) + L-glutamine + ATP + H2O = L-glutaminyl-tRNA(Gln) + L-glutamate + ADP + phosphate + H(+). It catalyses the reaction L-aspartyl-tRNA(Asn) + L-glutamine + ATP + H2O = L-asparaginyl-tRNA(Asn) + L-glutamate + ADP + phosphate + 2 H(+). In terms of biological role, allows the formation of correctly charged Asn-tRNA(Asn) or Gln-tRNA(Gln) through the transamidation of misacylated Asp-tRNA(Asn) or Glu-tRNA(Gln) in organisms which lack either or both of asparaginyl-tRNA or glutaminyl-tRNA synthetases. The reaction takes place in the presence of glutamine and ATP through an activated phospho-Asp-tRNA(Asn) or phospho-Glu-tRNA(Gln). The protein is Aspartyl/glutamyl-tRNA(Asn/Gln) amidotransferase subunit B of Lactobacillus delbrueckii subsp. bulgaricus (strain ATCC 11842 / DSM 20081 / BCRC 10696 / JCM 1002 / NBRC 13953 / NCIMB 11778 / NCTC 12712 / WDCM 00102 / Lb 14).